A 444-amino-acid chain; its full sequence is MVKARKTFKIITYGCQMNQRDSEMMADLLQDAGYEPVAREEEAGVIILDTCCVREKAENKVYGKLGQIEKLKSANPDLVIAVAGCMVQQPGVAEKIRQQAPYVDLLLGTGNLQELPQLIEEIKAMHRPRIVVGEQEGPVVEDLPRRRARGAQAFVTITYGCNNFCTYCIVPYVRGRERSRRPENIIKEVKELVDQGVIEVTLLGQNVNSYGRDLRDGINFAGLLERVNAVEGLKRIRYVTSHPRDFTPELVTTISRLDKVCEHVHLPVQAGSNRILELMHRGYTREHYLELVADLRRHIPGISLTTDLIVGFPGETEADFEDTLDLVARVQFDNAFTFMYSPRRGTEAATMPGQLPTAIKKERLKRLMELQNSISLAKNEALVGQEVEVLVEGPSKTDPDQLSGRTRTNKLIIFPGDQSLTGRLVRVRLTRAQTWLLKGEMVDG.

One can recognise an MTTase N-terminal domain in the interval 6–124 (KTFKIITYGC…LPQLIEEIKA (119 aa)). 6 residues coordinate [4Fe-4S] cluster: C15, C51, C85, C161, C165, and C168. The Radical SAM core domain occupies 147–377 (RARGAQAFVT…MELQNSISLA (231 aa)). The TRAM domain occupies 380-443 (EALVGQEVEV…TWLLKGEMVD (64 aa)).

The protein belongs to the methylthiotransferase family. MiaB subfamily. As to quaternary structure, monomer. The cofactor is [4Fe-4S] cluster.

Its subcellular location is the cytoplasm. It carries out the reaction N(6)-dimethylallyladenosine(37) in tRNA + (sulfur carrier)-SH + AH2 + 2 S-adenosyl-L-methionine = 2-methylsulfanyl-N(6)-dimethylallyladenosine(37) in tRNA + (sulfur carrier)-H + 5'-deoxyadenosine + L-methionine + A + S-adenosyl-L-homocysteine + 2 H(+). Catalyzes the methylthiolation of N6-(dimethylallyl)adenosine (i(6)A), leading to the formation of 2-methylthio-N6-(dimethylallyl)adenosine (ms(2)i(6)A) at position 37 in tRNAs that read codons beginning with uridine. This chain is tRNA-2-methylthio-N(6)-dimethylallyladenosine synthase, found in Moorella thermoacetica (strain ATCC 39073 / JCM 9320).